The chain runs to 815 residues: RNA-binding protein 5 (815 aa).

The interval 1-93 is disordered; sequence MGSDKRVSRT…EHDYRHDISD (93 aa). Residues S18, S59, S69, S72, and S78 each carry the phosphoserine modification. Residues 98–178 enclose the RRM 1 domain; that stretch reads KTIMLRGLPI…KHIAMHYSNP (81 aa). The segment at 181–210 adopts a RanBP2-type zinc-finger fold; sequence KFEDWLCNKCCLNNFRKRLKCFRCGADKFD. An RRM 2 domain is found at 231–315; sequence DTIILRNIAP…KTIGVDFAKS (85 aa). Positions 321–809 are required for interaction with U2AF2; that stretch reads VLSDGNRVSA…KDAVRKAMFA (489 aa). Residues 411–422 show a composition bias toward polar residues; sequence QSPQLYNQTSNP. Disordered regions lie at residues 411 to 468 and 507 to 540; these read QSPQ…DESS and PAAE…AQQI. The span at 426–446 shows a compositional bias: low complexity; it reads PTEEAQPSTSTSTQAPAASPT. Phosphoserine is present on S444. Residues 452 to 535 form a sufficient for interaction with ACIN1, PRPF8, SFRS3, SNRPB, SNRPN, SNRNP70 and SNRNP200 region; it reads TKYAVPDTST…KEKKEKPKSK (84 aa). Phosphoserine is present on residues S621 and S624. The C2H2-type; atypical zinc-finger motif lies at 647-677; that stretch reads MACLLCRRQFPNKDALVRHQQLSDLHKQNMD. Positions 743–789 constitute a G-patch domain; it reads HSNIGNKMLQAMGWREGSGLGRKCQGITAPIEAQVRLKGAGLGAKGS.

Belongs to the RBM5/RBM10 family. As to quaternary structure, component of the spliceosome A complex (also known as the prespliceosome). Appears to dissociate from the spliceosome upon formation of the spliceosome B complex (also known as the precatalytic spliceosome), in which the heterotrimeric U4/U6.U5 snRNPs are bound. Interacts with U2AF2; this interaction is direct. Also interacts with ACIN1, PRPF8, SFRS3, SNRPB, SNRPN, SNRNP70 and SNRNP200; these interactions may be indirect. Isoform 5 is widely expressed in normal tissues and is expressed at increased levels in T-leukemic cell lines.

It is found in the nucleus. Its function is as follows. Component of the spliceosome A complex. Binds to ssRNA containing the consensus sequence 5'-AGGUAA-3'. Regulates alternative splicing of a number of mRNAs. May modulate splice site pairing after recruitment of the U1 and U2 snRNPs to the 5' and 3' splice sites of the intron. May both positively and negatively regulate apoptosis by regulating the alternative splicing of several genes involved in this process, including FAS and CASP2/caspase-2. In the case of FAS, promotes exclusion of exon 6 thereby producing a soluble form of FAS that inhibits apoptosis. In the case of CASP2/caspase-2, promotes exclusion of exon 9 thereby producing a catalytically active form of CASP2/Caspase-2 that induces apoptosis. The polypeptide is RNA-binding protein 5 (RBM5) (Homo sapiens (Human)).